The following is a 150-amino-acid chain: Large ribosomal subunit protein bL9 (150 aa).

It belongs to the bacterial ribosomal protein bL9 family.

Its function is as follows. Binds to the 23S rRNA. The protein is Large ribosomal subunit protein bL9 of Streptococcus pyogenes serotype M2 (strain MGAS10270).